A 129-amino-acid chain; its full sequence is Small ribosomal subunit protein uS11 (129 aa).

This sequence belongs to the universal ribosomal protein uS11 family. In terms of assembly, part of the 30S ribosomal subunit. Interacts with proteins S7 and S18. Binds to IF-3.

Located on the platform of the 30S subunit, it bridges several disparate RNA helices of the 16S rRNA. Forms part of the Shine-Dalgarno cleft in the 70S ribosome. The sequence is that of Small ribosomal subunit protein uS11 from Salmonella newport (strain SL254).